A 510-amino-acid chain; its full sequence is Inositol-3-phosphate synthase (510 aa).

The NAD(+) site is built by G70, G71, N72, N73, D143, I180, Q190, R193, T230, A231, N232, T233, G281, S282, D306, S309, N340, N341, D342, K355, G393, D394, D422, and S423.

It belongs to the myo-inositol 1-phosphate synthase family. NAD(+) is required as a cofactor.

The protein localises to the cytoplasm. It localises to the cytosol. It is found in the nucleus. It catalyses the reaction D-glucose 6-phosphate = 1D-myo-inositol 3-phosphate. The protein operates within polyol metabolism; myo-inositol biosynthesis; myo-inositol from D-glucose 6-phosphate: step 1/2. In terms of biological role, key enzyme in myo-inositol biosynthesis pathway that catalyzes the conversion of glucose 6-phosphate to 1-myo-inositol 1-phosphate in a NAD-dependent manner. The chain is Inositol-3-phosphate synthase from Nicotiana tabacum (Common tobacco).